Reading from the N-terminus, the 404-residue chain is Cysteine desulfurase IscS (404 aa).

Residues 75 to 76 (AT), asparagine 155, glutamine 183, and 203 to 205 (SAH) each bind pyridoxal 5'-phosphate. An N6-(pyridoxal phosphate)lysine modification is found at lysine 206. Position 243 (threonine 243) interacts with pyridoxal 5'-phosphate. The active-site Cysteine persulfide intermediate is the cysteine 328. [2Fe-2S] cluster is bound at residue cysteine 328.

Belongs to the class-V pyridoxal-phosphate-dependent aminotransferase family. NifS/IscS subfamily. As to quaternary structure, homodimer. Forms a heterotetramer with IscU, interacts with other sulfur acceptors. Requires pyridoxal 5'-phosphate as cofactor.

It localises to the cytoplasm. It carries out the reaction (sulfur carrier)-H + L-cysteine = (sulfur carrier)-SH + L-alanine. It functions in the pathway cofactor biosynthesis; iron-sulfur cluster biosynthesis. Its function is as follows. Master enzyme that delivers sulfur to a number of partners involved in Fe-S cluster assembly, tRNA modification or cofactor biosynthesis. Catalyzes the removal of elemental sulfur atoms from cysteine to produce alanine. Functions as a sulfur delivery protein for Fe-S cluster synthesis onto IscU, an Fe-S scaffold assembly protein, as well as other S acceptor proteins. The protein is Cysteine desulfurase IscS of Pseudomonas fluorescens (strain SBW25).